A 433-amino-acid polypeptide reads, in one-letter code: Enolase (433 aa).

Gln164 serves as a coordination point for (2R)-2-phosphoglycerate. Glu206 (proton donor) is an active-site residue. Asp243, Glu289, and Asp316 together coordinate Mg(2+). Lys341, Arg370, Ser371, and Lys392 together coordinate (2R)-2-phosphoglycerate. Residue Lys341 is the Proton acceptor of the active site.

The protein belongs to the enolase family. It depends on Mg(2+) as a cofactor.

The protein resides in the cytoplasm. Its subcellular location is the secreted. It localises to the cell surface. It catalyses the reaction (2R)-2-phosphoglycerate = phosphoenolpyruvate + H2O. The protein operates within carbohydrate degradation; glycolysis; pyruvate from D-glyceraldehyde 3-phosphate: step 4/5. Catalyzes the reversible conversion of 2-phosphoglycerate (2-PG) into phosphoenolpyruvate (PEP). It is essential for the degradation of carbohydrates via glycolysis. The polypeptide is Enolase (Borreliella afzelii (strain PKo) (Borrelia afzelii)).